A 307-amino-acid chain; its full sequence is Woronin sorting complex protein (307 aa).

3 consecutive transmembrane segments (helical) span residues 106–125 (MATY…IWIL), 146–167 (NLIV…IAGA), and 207–227 (AWMP…NYIT). Positions 241–264 (GDGAHGDHRHDRERERDRERERHS) are enriched in basic and acidic residues. Residues 241-307 (GDGAHGDHRH…YPSLGQNPRY (67 aa)) are disordered. The segment covering 266–278 (PPHGHGPSHGGRP) has biased composition (low complexity).

It belongs to the peroxisomal membrane protein PXMP2/4 family. As to quaternary structure, self-assembles into detergent-resistant oligomers and forms a complex with hex-1 assemblies.

The protein localises to the peroxisome membrane. The protein resides in the cell septum. Its function is as follows. Woronin sorting complex protein involved in both Woronin bodies (WB) formation and inherence. Localizes to large peroxisome membranes where it self-assembles into detergent-resistant oligomers that envelop hex-1 assemblies, producing asymmetrical nascent WBs. These structures are then delivered to the cell cortex, which permits partitioning of the nascent WB and WB inheritance. The polypeptide is Woronin sorting complex protein (Neurospora crassa (strain ATCC 24698 / 74-OR23-1A / CBS 708.71 / DSM 1257 / FGSC 987)).